The sequence spans 132 residues: Small ribosomal subunit protein uS8 (132 aa).

It belongs to the universal ribosomal protein uS8 family. In terms of assembly, part of the 30S ribosomal subunit. Contacts proteins S5 and S12.

Functionally, one of the primary rRNA binding proteins, it binds directly to 16S rRNA central domain where it helps coordinate assembly of the platform of the 30S subunit. This Rickettsia rickettsii (strain Sheila Smith) protein is Small ribosomal subunit protein uS8.